The following is a 199-amino-acid chain: GTP cyclohydrolase 1 (199 aa).

Residues cysteine 89, histidine 92, and cysteine 161 each coordinate Zn(2+).

The protein belongs to the GTP cyclohydrolase I family. As to quaternary structure, toroid-shaped homodecamer, composed of two pentamers of five dimers.

The enzyme catalyses GTP + H2O = 7,8-dihydroneopterin 3'-triphosphate + formate + H(+). The protein operates within cofactor biosynthesis; 7,8-dihydroneopterin triphosphate biosynthesis; 7,8-dihydroneopterin triphosphate from GTP: step 1/1. The protein is GTP cyclohydrolase 1 of Bifidobacterium longum (strain NCC 2705).